Consider the following 325-residue polypeptide: Elongation factor P--(R)-beta-lysine ligase (325 aa).

76 to 78 (SPE) serves as a coordination point for substrate. ATP-binding positions include 100–102 (RNE) and Asn-109. Tyr-118 lines the substrate pocket. Position 244-245 (244-245 (EL)) interacts with ATP. Position 251 (Glu-251) interacts with substrate. Residue Gly-300 coordinates ATP.

This sequence belongs to the class-II aminoacyl-tRNA synthetase family. EpmA subfamily. Homodimer.

It catalyses the reaction D-beta-lysine + L-lysyl-[protein] + ATP = N(6)-((3R)-3,6-diaminohexanoyl)-L-lysyl-[protein] + AMP + diphosphate + H(+). In terms of biological role, with EpmB is involved in the beta-lysylation step of the post-translational modification of translation elongation factor P (EF-P) on 'Lys-34'. Catalyzes the ATP-dependent activation of (R)-beta-lysine produced by EpmB, forming a lysyl-adenylate, from which the beta-lysyl moiety is then transferred to the epsilon-amino group of EF-P 'Lys-34'. The chain is Elongation factor P--(R)-beta-lysine ligase from Escherichia fergusonii (strain ATCC 35469 / DSM 13698 / CCUG 18766 / IAM 14443 / JCM 21226 / LMG 7866 / NBRC 102419 / NCTC 12128 / CDC 0568-73).